A 464-amino-acid chain; its full sequence is UDP-N-acetylmuramate--L-alanine ligase (464 aa).

111–117 (GAHGKTT) is a binding site for ATP.

This sequence belongs to the MurCDEF family.

The protein localises to the cytoplasm. The catalysed reaction is UDP-N-acetyl-alpha-D-muramate + L-alanine + ATP = UDP-N-acetyl-alpha-D-muramoyl-L-alanine + ADP + phosphate + H(+). The protein operates within cell wall biogenesis; peptidoglycan biosynthesis. Cell wall formation. The chain is UDP-N-acetylmuramate--L-alanine ligase from Dictyoglomus turgidum (strain DSM 6724 / Z-1310).